The primary structure comprises 273 residues: 4-hydroxy-tetrahydrodipicolinate reductase (273 aa).

NAD(+)-binding positions include 11–16 (GALGRM) and 106–108 (GTT). H162 acts as the Proton donor/acceptor in catalysis. (S)-2,3,4,5-tetrahydrodipicolinate is bound at residue H163. K166 serves as the catalytic Proton donor. Residue 172 to 173 (GT) participates in (S)-2,3,4,5-tetrahydrodipicolinate binding.

This sequence belongs to the DapB family.

It is found in the cytoplasm. The catalysed reaction is (S)-2,3,4,5-tetrahydrodipicolinate + NAD(+) + H2O = (2S,4S)-4-hydroxy-2,3,4,5-tetrahydrodipicolinate + NADH + H(+). It catalyses the reaction (S)-2,3,4,5-tetrahydrodipicolinate + NADP(+) + H2O = (2S,4S)-4-hydroxy-2,3,4,5-tetrahydrodipicolinate + NADPH + H(+). It participates in amino-acid biosynthesis; L-lysine biosynthesis via DAP pathway; (S)-tetrahydrodipicolinate from L-aspartate: step 4/4. Functionally, catalyzes the conversion of 4-hydroxy-tetrahydrodipicolinate (HTPA) to tetrahydrodipicolinate. In Synechococcus sp. (strain RCC307), this protein is 4-hydroxy-tetrahydrodipicolinate reductase.